A 290-amino-acid polypeptide reads, in one-letter code: Light-independent protochlorophyllide reductase iron-sulfur ATP-binding protein (290 aa).

Residues 34–39 and K63 contribute to the ATP site; that span reads GIGKST. S38 is a Mg(2+) binding site. The [4Fe-4S] cluster site is built by C119 and C153. Residues 204 to 205 and 228 to 230 each bind ATP; these read NR and PDL.

The protein belongs to the NifH/BchL/ChlL family. In terms of assembly, homodimer. Protochlorophyllide reductase is composed of three subunits; BchL, BchN and BchB. The cofactor is [4Fe-4S] cluster.

It catalyses the reaction chlorophyllide a + oxidized 2[4Fe-4S]-[ferredoxin] + 2 ADP + 2 phosphate = protochlorophyllide a + reduced 2[4Fe-4S]-[ferredoxin] + 2 ATP + 2 H2O. It participates in porphyrin-containing compound metabolism; bacteriochlorophyll biosynthesis (light-independent). Its function is as follows. Component of the dark-operative protochlorophyllide reductase (DPOR) that uses Mg-ATP and reduced ferredoxin to reduce ring D of protochlorophyllide (Pchlide) to form chlorophyllide a (Chlide). This reaction is light-independent. The L component serves as a unique electron donor to the NB-component of the complex, and binds Mg-ATP. The polypeptide is Light-independent protochlorophyllide reductase iron-sulfur ATP-binding protein (Rhodospirillum rubrum).